Consider the following 872-residue polypeptide: Alanine--tRNA ligase (872 aa).

Residues histidine 567, histidine 571, cysteine 669, and histidine 673 each contribute to the Zn(2+) site.

The protein belongs to the class-II aminoacyl-tRNA synthetase family. Requires Zn(2+) as cofactor.

The protein resides in the cytoplasm. It catalyses the reaction tRNA(Ala) + L-alanine + ATP = L-alanyl-tRNA(Ala) + AMP + diphosphate. Its function is as follows. Catalyzes the attachment of alanine to tRNA(Ala) in a two-step reaction: alanine is first activated by ATP to form Ala-AMP and then transferred to the acceptor end of tRNA(Ala). Also edits incorrectly charged Ser-tRNA(Ala) and Gly-tRNA(Ala) via its editing domain. This chain is Alanine--tRNA ligase, found in Streptococcus pyogenes serotype M1.